Here is a 355-residue protein sequence, read N- to C-terminus: Peptide chain release factor 1 (355 aa).

At Gln233 the chain carries N5-methylglutamine.

It belongs to the prokaryotic/mitochondrial release factor family. Methylated by PrmC. Methylation increases the termination efficiency of RF1.

Its subcellular location is the cytoplasm. Peptide chain release factor 1 directs the termination of translation in response to the peptide chain termination codons UAG and UAA. The protein is Peptide chain release factor 1 of Desulforudis audaxviator (strain MP104C).